The sequence spans 696 residues: SEC14 domain and spectrin repeat-containing protein 1 (696 aa).

Positions 1–153 constitute a CRAL-TRIO domain; sequence MEASVILPIL…DFGGSLTYDH (153 aa). Spectrin repeat units lie at residues 275–378, 381–494, and 500–602; these read EEIQ…NLLQ, LEFH…LKML, and FKCE…HRLE.

It belongs to the SOLO family. As to quaternary structure, interacts (via the spectrin 1 repeat) with TRPC4 and TRPC5 (via CIRB domain). Interacts with CTNNB1. As to expression, broad expression. High expression in thalamus and brain. Significantly expressed in vasculature.

Functionally, may act as the primary docking protein directing membrane turnover and assembly of the transient receptor potential channels TRPC4 and TRPC5. Binds phospholipids such as phosphatidylinositol monophosphates, phosphatidylinositol diphosphates (PIP2s) and phosphatidic acid, but not less polar lipids including phosphatidylcholine, phosphatidylserine, and phosphatidylinositol. The binding to PIP2s is calcium dependent. Might be involved in the plasma membrane localization of CTNNB1. The protein is SEC14 domain and spectrin repeat-containing protein 1 (SESTD1) of Homo sapiens (Human).